A 238-amino-acid chain; its full sequence is Orotidine 5'-phosphate decarboxylase (238 aa).

Residues aspartate 10, lysine 32, 59 to 68 (DLKLHDIPNT), threonine 122, arginine 184, glutamine 193, glycine 213, and arginine 214 each bind substrate. Residue lysine 61 is the Proton donor of the active site.

The protein belongs to the OMP decarboxylase family. Type 1 subfamily. As to quaternary structure, homodimer.

It catalyses the reaction orotidine 5'-phosphate + H(+) = UMP + CO2. The protein operates within pyrimidine metabolism; UMP biosynthesis via de novo pathway; UMP from orotate: step 2/2. Catalyzes the decarboxylation of orotidine 5'-monophosphate (OMP) to uridine 5'-monophosphate (UMP). The protein is Orotidine 5'-phosphate decarboxylase of Bacillus cereus (strain AH820).